A 270-amino-acid polypeptide reads, in one-letter code: Small ribosomal subunit protein uS2 (270 aa).

Residues 207–225 show a composition bias toward acidic residues; it reads EEPENTEEAAEEAATEEVV. Residues 207–270 are disordered; it reads EEPENTEEAA…SESAPAPVAA (64 aa). Residues 226 to 258 are compositionally biased toward low complexity; that stretch reads ETAAAEAAAATNADNWDVAPDAGAGAADWAATD.

It belongs to the universal ribosomal protein uS2 family. In terms of assembly, component of the small ribosomal subunit. Mature ribosomes consist of a small (40S) and a large (60S) subunit. The 40S subunit contains about 33 different proteins and 1 molecule of RNA (18S). The 60S subunit contains about 49 different proteins and 3 molecules of RNA (25S, 5.8S and 5S). Interacts with RPS21.

Its subcellular location is the cytoplasm. In terms of biological role, required for the assembly and/or stability of the 40S ribosomal subunit. Required for the processing of the 20S rRNA-precursor to mature 18S rRNA in a late step of the maturation of 40S ribosomal subunits. This chain is Small ribosomal subunit protein uS2, found in Yarrowia lipolytica (strain CLIB 122 / E 150) (Yeast).